A 742-amino-acid chain; its full sequence is MRPPAQARWEGQGPTAPLRLRSGARWGRGRPHCWVYVRVRVTIGYHLDRDDSGGMATTSAASDSACSAAPPPVGGAQAAAAVEEEEREVVRVRVKKCESFLSPEFRSFAVDPQITSLDVLQHILIRAFDLNGKKNFGISYLARDRLGQETFLSLLSDWDLSTAFATASKPYLQLRVDIRPSEDSPLLEDWDIISPKDVIGSDVLLAEKRSSLTTAALPFTQSILSQVGRTLSKVQQVLSWSYGEDVKPFKPPLSDAEFHTYLNHEGQLSRPEELRLRIYHGGVEPSLRKVVWRYLLNVYPDGLTGRERMDYMKRKSREYEQLKSEWAQRVNPEDLEFIRSTVLKDVLRTDRAHPYYAGPEDGPHLRALHDLLTTYAVTHPQVSYCQGMSDLASPILAVMDHEGHAFVCFCGIMKRLAANFHPDGRAMATKFAHLKLLLRHADPDFYQYLQEAGADDLFFCYRWLLLELKREFAFDDALRMLEVTWSSLPPDPPEHEVELVGPPSQVADTGFGSHRGRPVRQRHMLRPAGGGGGAFEDAVVHLAASSQGPSGGGRLLRQASLDGLQQLRDNMGLRKDHLVQLSHPATLISSKSLSEPLLNSPDPLLSTSSRPDSPSSSSPPSTQEASPSGDIAVGSPLMQEVGSPRDPGKPVPPPPPMGLPPPQEFGRGNPFMLFLCLAILLEHRDHIMRNGLDYNELAMHFDRLVRKHHLGRVLRRAKALFADYLQSEVWDSEEGAEATAPS.

A disordered region spans residues 1–22 (MRPPAQARWEGQGPTAPLRLRS). At S194 the chain carries Phosphoserine. At T214 the chain carries Phosphothreonine. Residues 282–488 (GVEPSLRKVV…RMLEVTWSSL (207 aa)) form the Rab-GAP TBC domain. Phosphoserine is present on S560. Residues 592–664 (SLSEPLLNSP…PPMGLPPPQE (73 aa)) are disordered. The segment covering 600-628 (SPDPLLSTSSRPDSPSSSSPPSTQEASPS) has biased composition (low complexity). Pro residues predominate over residues 649-663 (KPVPPPPPMGLPPPQ).

As to quaternary structure, interacts (via N-terminus) with MAP1LC3B, GABARAP and GABARAPL2.

It is found in the cytoplasm. Its subcellular location is the cytoplasmic vesicle. It localises to the autophagosome. Functionally, acts as a GTPase-activating protein specific for RAB33B. Involved in the regulation of autophagosome maturation, the process in which autophagosomes fuse with endosomes and lysosomes. The polypeptide is TBC1 domain family member 25 (Tbc1d25) (Mus musculus (Mouse)).